Here is a 141-residue protein sequence, read N- to C-terminus: Transcription antitermination protein NusB (141 aa).

The protein belongs to the NusB family.

In terms of biological role, involved in transcription antitermination. Required for transcription of ribosomal RNA (rRNA) genes. Binds specifically to the boxA antiterminator sequence of the ribosomal RNA (rrn) operons. The polypeptide is Transcription antitermination protein NusB (Desulfotalea psychrophila (strain LSv54 / DSM 12343)).